The sequence spans 172 residues: MFNKVAFMNIPMMDLIMIVIAIIITIGSFLFIAYLIFKYSKIKKQVKIIREVKINLPKMLKSNMIKNSFLIISLLCFYFGMLYIAGELVISHILFIAICWIVVFLYIIIKGETRGYICEEGLLVSGVLYSWKEFKDVKIEDNYIILTTPIHKIVIKKEKGVENILKNYLKRN.

3 helical membrane passes run 16–36 (IMIV…AYLI), 68–88 (SFLI…AGEL), and 89–109 (VISH…YIII).

It is found in the cell membrane. This is an uncharacterized protein from Methanocaldococcus jannaschii (strain ATCC 43067 / DSM 2661 / JAL-1 / JCM 10045 / NBRC 100440) (Methanococcus jannaschii).